Consider the following 342-residue polypeptide: MYNLKDMTLEEMEEFFVNIGESRYRAKQIYKWIYGKKVTDFDQMTDISKNLRSKLKEIAYVSQLKIEERRVSEIDDTVKYLFLLEDGNIIEGVAIKYRFGNTACVSTQVGCNMRCSFCASAIGGKVRDLKASEMVDQVMAIDSDYGKISNIVLMGSGEPFDNYDEVMKFIKIVNNPHGLGIGSRHITISTCGIVPKIYQFADEKLQVNLSISLHAPNDELRTQLMPINKAYPLEELMKACKYYVDKTRRRITFEYSLIEGVNDKKEHAYQLVDLLKGMLCHINLIPINYVREIGFKKANNEKVMMFKRIIEDAGISCTVRRELGSDIEAACGQLRRKYLKER.

Catalysis depends on glutamate 91, which acts as the Proton acceptor. The 230-residue stretch at 97-326 (YRFGNTACVS…CTVRRELGSD (230 aa)) folds into the Radical SAM core domain. Residues cysteine 104 and cysteine 331 are joined by a disulfide bond. Positions 111, 115, and 118 each coordinate [4Fe-4S] cluster. S-adenosyl-L-methionine contacts are provided by residues 157–158 (GE), serine 189, 212–214 (SLH), and asparagine 288. Cysteine 331 acts as the S-methylcysteine intermediate in catalysis.

It belongs to the radical SAM superfamily. RlmN family. [4Fe-4S] cluster serves as cofactor.

It is found in the cytoplasm. The catalysed reaction is adenosine(2503) in 23S rRNA + 2 reduced [2Fe-2S]-[ferredoxin] + 2 S-adenosyl-L-methionine = 2-methyladenosine(2503) in 23S rRNA + 5'-deoxyadenosine + L-methionine + 2 oxidized [2Fe-2S]-[ferredoxin] + S-adenosyl-L-homocysteine. The enzyme catalyses adenosine(37) in tRNA + 2 reduced [2Fe-2S]-[ferredoxin] + 2 S-adenosyl-L-methionine = 2-methyladenosine(37) in tRNA + 5'-deoxyadenosine + L-methionine + 2 oxidized [2Fe-2S]-[ferredoxin] + S-adenosyl-L-homocysteine. In terms of biological role, specifically methylates position 2 of adenine 2503 in 23S rRNA and position 2 of adenine 37 in tRNAs. The polypeptide is Probable dual-specificity RNA methyltransferase RlmN (Thermoanaerobacter pseudethanolicus (strain ATCC 33223 / 39E) (Clostridium thermohydrosulfuricum)).